A 146-amino-acid chain; its full sequence is Hemoglobin subunit delta (146 aa).

The Globin domain maps to histidine 2 to histidine 146. Residues histidine 63 and histidine 92 each contribute to the heme b site.

It belongs to the globin family. Heterotetramer of two delta chains and two alpha chains. As to expression, red blood cells.

This chain is Hemoglobin subunit delta (HBD), found in Ateles fusciceps (Brown-headed spider monkey).